The following is a 670-amino-acid chain: UvrABC system protein B (670 aa).

The region spanning 25 to 412 is the Helicase ATP-binding domain; that stretch reads EGLEAGLSHQ…AGRVIEQVVR (388 aa). Residue 38-45 participates in ATP binding; it reads GVTGSGKT. The Beta-hairpin motif lies at 91 to 114; that stretch reads YYDYYQPEAYVPSSDTYIEKDSSI. A Helicase C-terminal domain is found at 429–582; it reads QVDDLLSQIR…QIAFNEAHGI (154 aa). The UVR domain occupies 631 to 666; sequence SKRIRQLEEKMYQLARDLEFEAAAQLRDEIQTLRER.

Belongs to the UvrB family. Forms a heterotetramer with UvrA during the search for lesions. Interacts with UvrC in an incision complex.

It localises to the cytoplasm. Its function is as follows. The UvrABC repair system catalyzes the recognition and processing of DNA lesions. A damage recognition complex composed of 2 UvrA and 2 UvrB subunits scans DNA for abnormalities. Upon binding of the UvrA(2)B(2) complex to a putative damaged site, the DNA wraps around one UvrB monomer. DNA wrap is dependent on ATP binding by UvrB and probably causes local melting of the DNA helix, facilitating insertion of UvrB beta-hairpin between the DNA strands. Then UvrB probes one DNA strand for the presence of a lesion. If a lesion is found the UvrA subunits dissociate and the UvrB-DNA preincision complex is formed. This complex is subsequently bound by UvrC and the second UvrB is released. If no lesion is found, the DNA wraps around the other UvrB subunit that will check the other stand for damage. This chain is UvrABC system protein B, found in Pseudomonas aeruginosa (strain ATCC 15692 / DSM 22644 / CIP 104116 / JCM 14847 / LMG 12228 / 1C / PRS 101 / PAO1).